The following is a 443-amino-acid chain: ATP-dependent protease ATPase subunit HslU (443 aa).

ATP contacts are provided by residues isoleucine 18 and 60 to 65 (GVGKTE). Positions 137–156 (PPPRDAWGQNEQSEDTSNTR) are disordered. The segment covering 145–156 (QNEQSEDTSNTR) has biased composition (polar residues). 3 residues coordinate ATP: aspartate 256, glutamate 321, and arginine 393.

It belongs to the ClpX chaperone family. HslU subfamily. In terms of assembly, a double ring-shaped homohexamer of HslV is capped on each side by a ring-shaped HslU homohexamer. The assembly of the HslU/HslV complex is dependent on binding of ATP.

The protein resides in the cytoplasm. ATPase subunit of a proteasome-like degradation complex; this subunit has chaperone activity. The binding of ATP and its subsequent hydrolysis by HslU are essential for unfolding of protein substrates subsequently hydrolyzed by HslV. HslU recognizes the N-terminal part of its protein substrates and unfolds these before they are guided to HslV for hydrolysis. This Vibrio vulnificus (strain YJ016) protein is ATP-dependent protease ATPase subunit HslU.